The chain runs to 483 residues: V-type proton ATPase subunit H (483 aa).

Ser483 is subject to Phosphoserine.

This sequence belongs to the V-ATPase H subunit family. As to quaternary structure, V-ATPase is a heteromultimeric enzyme made up of two complexes: the ATP-hydrolytic V1 complex and the proton translocation V0 complex. The V1 complex consists of three catalytic AB heterodimers that form a heterohexamer, three peripheral stalks each consisting of EG heterodimers, one central rotor including subunits D and F, and the regulatory subunits C and H. The proton translocation complex V0 consists of the proton transport subunit a, a ring of proteolipid subunits c9c'', rotary subunit d, subunits e and f, and the accessory subunits ATP6AP1/Ac45 and ATP6AP2/PRR. Interacts with AP2M1.

The protein resides in the cytoplasmic vesicle. It is found in the clathrin-coated vesicle membrane. Subunit of the V1 complex of vacuolar(H+)-ATPase (V-ATPase), a multisubunit enzyme composed of a peripheral complex (V1) that hydrolyzes ATP and a membrane integral complex (V0) that translocates protons. V-ATPase is responsible for acidifying and maintaining the pH of intracellular compartments and in some cell types, is targeted to the plasma membrane, where it is responsible for acidifying the extracellular environment. Subunit H is essential for V-ATPase activity, but not for the assembly of the complex. Involved in the endocytosis mediated by clathrin-coated pits, required for the formation of endosomes. The chain is V-type proton ATPase subunit H (ATP6V1H) from Sus scrofa (Pig).